The primary structure comprises 269 residues: Hemin import ATP-binding protein HmuV (269 aa).

An ABC transporter domain is found at 2-242; it reads LEVIHTGLNI…AMVEACFDLP (241 aa). Residue 34–41 coordinates ATP; that stretch reads GPNGAGKS.

This sequence belongs to the ABC transporter superfamily. Heme (hemin) importer (TC 3.A.1.14.5) family. The complex is composed of two ATP-binding proteins (HmuV), two transmembrane proteins (HmuU) and a solute-binding protein (HmuT).

Its subcellular location is the cell inner membrane. Functionally, part of the ABC transporter complex HmuTUV involved in hemin import. Responsible for energy coupling to the transport system. The sequence is that of Hemin import ATP-binding protein HmuV from Methylobacillus flagellatus (strain ATCC 51484 / DSM 6875 / VKM B-1610 / KT).